Consider the following 327-residue polypeptide: T-cell surface glycoprotein CD1a (327 aa).

The first 16 residues, 1–16 (MLFLLLPLLAVLPGDG), serve as a signal peptide directing secretion. Residues 17-300 (NADGLKEPLS…VLYWEHHSSV (284 aa)) lie on the Extracellular side of the membrane. N-linked (GlcNAc...) asparagine glycosylation is found at N37, N60, and N74. An a D-galactosylceramide-binding site is contributed by 90 to 94 (RTIRS). 2 disulfide bridges follow: C119–C183 and C223–C278. N145 carries an N-linked (GlcNAc...) asparagine glycan. 2 residues coordinate a D-galactosylceramide: E171 and T175. An Ig-like domain is found at 184–291 (PRFILGLLDA…HSSLEGQDIV (108 aa)). The chain crosses the membrane as a helical span at residues 301–321 (GFIILAVIVPLLLLIGLALWF). The Cytoplasmic portion of the chain corresponds to 322 to 327 (RKRCFC).

As to quaternary structure, heterodimer with B2M (beta-2-microglobulin). Interacts with CD74. As to expression, expressed on cortical thymocytes, epidermal Langerhans cells, dendritic cells, on certain T-cell leukemias, and in various other tissues.

The protein localises to the cell membrane. It is found in the membrane raft. It localises to the endosome membrane. Antigen-presenting protein that binds self and non-self lipid and glycolipid antigens and presents them to T-cell receptors on natural killer T-cells. In Homo sapiens (Human), this protein is T-cell surface glycoprotein CD1a (CD1A).